Consider the following 485-residue polypeptide: UDP-N-acetylmuramate--L-alanine ligase (485 aa).

120-126 lines the ATP pocket; that stretch reads GSHGKTT.

It belongs to the MurCDEF family.

The protein localises to the cytoplasm. It carries out the reaction UDP-N-acetyl-alpha-D-muramate + L-alanine + ATP = UDP-N-acetyl-alpha-D-muramoyl-L-alanine + ADP + phosphate + H(+). The protein operates within cell wall biogenesis; peptidoglycan biosynthesis. Functionally, cell wall formation. This is UDP-N-acetylmuramate--L-alanine ligase from Rickettsia africae (strain ESF-5).